The sequence spans 528 residues: uncharacterized protein (528 aa).

6-35 (DYVVVGTGSAGAVVASRLSTDPATTVVALE) serves as a coordination point for FAD. H468 acts as the Proton acceptor in catalysis.

Belongs to the GMC oxidoreductase family. The cofactor is FAD.

This is an uncharacterized protein from Mycobacterium bovis (strain ATCC BAA-935 / AF2122/97).